The chain runs to 201 residues: Large ribosomal subunit protein bL25 (201 aa).

The disordered stretch occupies residues 179-201 (VSITAPRVEAEKTEEEEPESTEE). The span at 190-201 (KTEEEEPESTEE) shows a compositional bias: acidic residues.

It belongs to the bacterial ribosomal protein bL25 family. CTC subfamily. In terms of assembly, part of the 50S ribosomal subunit; part of the 5S rRNA/L5/L18/L25 subcomplex. Contacts the 5S rRNA. Binds to the 5S rRNA independently of L5 and L18.

Its function is as follows. This is one of the proteins that binds to the 5S RNA in the ribosome where it forms part of the central protuberance. The sequence is that of Large ribosomal subunit protein bL25 from Prosthecochloris aestuarii (strain DSM 271 / SK 413).